Here is a 553-residue protein sequence, read N- to C-terminus: Putative transport protein KPN78578_40470 (553 aa).

5 helical membrane passes run 4–24 (IALTVSVLALVAVVGLWIGNV), 28–48 (GVGFGIGGVLFGGIIVGHFVD), 65–85 (FGLILFVYTIGIQVGPGFFAS), 95–115 (LFAILIVILGGLVTAVLHKLF), and 158–178 (MSYAMAYPFGICGILLTMWLV). RCK C-terminal domains follow at residues 192 to 276 (RFEE…VIGQ) and 279 to 361 (ATSL…ELGN). 6 consecutive transmembrane segments (helical) span residues 371 to 391 (MLPVFIGIGLGVLLGSIPLFI), 403 to 425 (AGGPLIMALILGRIGSIGKLYWF), 437 to 457 (LGIVLFLAVVGLKSGGDFVAT), 464 to 484 (LSWIAYGIFITAIPLLTVGVL), 493 to 513 (YLTLCGMLAGSMTDPPALAFA), and 532 to 552 (PLVMFLRIITPQLLAVLFWGL).

The protein belongs to the AAE transporter (TC 2.A.81) family. YidE subfamily.

Its subcellular location is the cell membrane. The protein is Putative transport protein KPN78578_40470 of Klebsiella pneumoniae subsp. pneumoniae (strain ATCC 700721 / MGH 78578).